Consider the following 397-residue polypeptide: RNA pseudouridine synthase 5 (397 aa).

The S4 RNA-binding domain maps to 64-114 (APLPGWIKRIRDGQITVDGEVATDPDMILREGSKLVYHRLPWQEPFAPHLL).

The protein belongs to the pseudouridine synthase RluA family.

It catalyses the reaction a uridine in RNA = a pseudouridine in RNA. In Oryza sativa subsp. japonica (Rice), this protein is RNA pseudouridine synthase 5.